The following is a 167-amino-acid chain: Centrin-3 (167 aa).

EF-hand domains lie at 25–60, 61–96, 98–133, and 134–167; these read EQKQ…LGFD, VKKA…WILE, DPHE…LGEN, and MSDE…TGDI. Ca(2+) is bound by residues D38, D40, D42, and E49. Residue S135 is modified to Phosphoserine. Residues D147, D149, D151, E153, and E158 each coordinate Ca(2+).

This sequence belongs to the centrin family. In terms of assembly, monomer. Component of the TREX-2 complex (transcription and export complex 2), composed of at least ENY2, GANP, PCID2, SEM1, and either centrin CETN2 or CETN3. Interacts with USP49.

The protein localises to the cytoplasm. Its subcellular location is the cytoskeleton. It localises to the microtubule organizing center. The protein resides in the centrosome. It is found in the nucleus. The protein localises to the nucleolus. Its subcellular location is the nucleus envelope. It localises to the nuclear pore complex. The protein resides in the centriole. Functionally, plays a fundamental role in microtubule-organizing center structure and function. As a component of the TREX-2 complex, involved in the export of mRNAs to the cytoplasm through the nuclear pores. The sequence is that of Centrin-3 (Cetn3) from Mus musculus (Mouse).